We begin with the raw amino-acid sequence, 246 residues long: UDP-N-acetyl-D-mannosaminuronic acid transferase (246 aa).

It belongs to the glycosyltransferase 26 family.

It catalyses the reaction UDP-N-acetyl-alpha-D-mannosaminouronate + N-acetyl-alpha-D-glucosaminyl-di-trans,octa-cis-undecaprenyl diphosphate = beta-D-ManNAcA-(1-&gt;4)-alpha-D-GlcNAc-di-trans,octa-cis-undecaprenyl diphosphate + UDP + H(+). The protein operates within bacterial outer membrane biogenesis; enterobacterial common antigen biosynthesis. Functionally, catalyzes the synthesis of Und-PP-GlcNAc-ManNAcA (Lipid II), the second lipid-linked intermediate involved in enterobacterial common antigen (ECA) synthesis. This is UDP-N-acetyl-D-mannosaminuronic acid transferase from Escherichia fergusonii (strain ATCC 35469 / DSM 13698 / CCUG 18766 / IAM 14443 / JCM 21226 / LMG 7866 / NBRC 102419 / NCTC 12128 / CDC 0568-73).